The chain runs to 463 residues: Calcitonin gene-related peptide type 1 receptor (463 aa).

An N-terminal signal peptide occupies residues 1–22 (MDKKHILCFLVLLPLNMALISA). At 23-138 (ESEEGVNQTD…STHEKVKTAL (116 aa)) the chain is on the extracellular side. N-linked (GlcNAc...) asparagine glycans are attached at residues N29, N65, N117, N122, N127, and N128. 3 cysteine pairs are disulfide-bonded: C47/C73, C64/C104, and C87/C126. The chain crosses the membrane as a helical span at residues 139 to 163 (NLFYLTIIGHGLSIASLIISLIIFF). The Cytoplasmic portion of the chain corresponds to 164-174 (YFKSLSCQRIT). A helical membrane pass occupies residues 175 to 197 (LHKNLFFSFICNSIVTIIHLTAV). Residues 198–208 (ANNQALVATNP) are Extracellular-facing. Residues 209 to 237 (VSCKVSQFIHLYLMGCNYFWMLCEGVYLH) form a helical membrane-spanning segment. The Cytoplasmic portion of the chain corresponds to 238–251 (TLIVVAVFAEKQHL). Residues 252-272 (MWYYFLGWGFPLLPACIHAIA) traverse the membrane as a helical segment. Residues 273 to 288 (RSLYYNDNCWISSDTH) are Extracellular-facing. The required for RAMP3 interaction stretch occupies residues 287–288 (TH). Residues 289 to 313 (LLYIIHGPICAALLVNLFFLLNIVR) form a helical membrane-spanning segment. The Cytoplasmic portion of the chain corresponds to 314–328 (VLITKLKVTHQVESN). Residues 329–350 (LYMKAVRATLILVPLLGIEFVL) traverse the membrane as a helical segment. Residues 351–365 (FPWRPEGKVAEEVYD) lie on the Extracellular side of the membrane. A helical membrane pass occupies residues 366 to 386 (YVMHILMHFQGLLVATIFCFF). Topologically, residues 387 to 463 (NGEVQAILRR…KSENMYDLVM (77 aa)) are cytoplasmic. Phosphoserine occurs at positions 419 and 444.

The protein belongs to the G-protein coupled receptor 2 family. In terms of assembly, heterodimer of CALCRL and RAMP1; the receptor complex functions as CGRP receptor. Heterodimer of CALCRL and RAMP2 or CALCRL and RAMP3; the complexes function as adrenomedullin receptor. In terms of tissue distribution, expressed predominantly in the lung, thymus, heart and brain.

It is found in the cell membrane. In terms of biological role, g protein-coupled receptor which specificity is determined by its interaction with receptor-activity-modifying proteins (RAMPs). Together with RAMP1, form the receptor complex for calcitonin-gene-related peptides CALCA/CGRP1 and CALCB/CGRP2. Together with RAMP2 or RAMP3, function as receptor complexes for adrenomedullin (ADM and ADM2). Ligand binding causes a conformation change that triggers signaling via guanine nucleotide-binding proteins (G proteins) and modulates the activity of downstream effectors. Activates cAMP-dependent pathway. This chain is Calcitonin gene-related peptide type 1 receptor, found in Mus musculus (Mouse).